Here is a 489-residue protein sequence, read N- to C-terminus: Diacylglycerol O-acyltransferase 1 (489 aa).

The disordered stretch occupies residues 1–54; sequence MGDRGGAGGSRRRRTGSRPSIQGGSGPAAAEEEVRDVGAGGDAPVRDTDKDGDV. The Cytoplasmic portion of the chain corresponds to 1–80; sequence MGDRGGAGGS…SLFSSDSGFS (80 aa). The interval 1 to 88 is involved in homomerization; that stretch reads MGDRGGAGGS…FSNYRGILNW (88 aa). The residue at position 20 (S20) is a Phosphoserine. The segment covering 44–53 has biased composition (basic and acidic residues); the sequence is PVRDTDKDGD. The helical transmembrane segment at 81 to 115 threads the bilayer; that stretch reads NYRGILNWCVVMLILSNARLFLENLIKYGILVDPI. The Lumenal portion of the chain corresponds to 116 to 127; the sequence is QVVSLFLKDPYS. The interval 116–127 is extracellular loop 1 (EL1); that stretch reads QVVSLFLKDPYS. Residues 128–153 traverse the membrane as a helical segment; sequence WPALCLVIVANIFAVAAFQVEKRLAV. Residues 128–489 are MBOAT fold; it reads WPALCLVIVA…LNREAPAAGT (362 aa). The Cytoplasmic portion of the chain corresponds to 154–158; it reads GALTE. Residues 159 to 181 traverse the membrane as a helical segment; sequence QAGLLLHGVNLATILCFPAAVAF. The Lumenal segment spans residues 182 to 188; that stretch reads LLESITP. The chain crosses the membrane as a helical span at residues 189 to 220; sequence VGSVLALMVYTILFLKLFSYRDVNLWCRERRA. Residues 221–274 lie on the Cytoplasmic side of the membrane; the sequence is GAKAKAALAGKKANGGAAQRTVSYPDNLTYRDLYYFLFAPTLCYELNFPRSPRI. An intracellular loop 1 (IL1) region spans residues 225-277; it reads KAALAGKKANGGAAQRTVSYPDNLTYRDLYYFLFAPTLCYELNFPRSPRIRKR. The helical transmembrane segment at 275 to 309 threads the bilayer; that stretch reads RKRFLLRRLLEMLFLTQLQVGLIQQWMVPAIQNSM. The Lumenal portion of the chain corresponds to 310-316; the sequence is KPFKDMD. A helical transmembrane segment spans residues 317–354; it reads YSRIVERLLKLAVPNHLIWLIFFYWLFHSCLNAVAELM. Residues 355–400 lie on the Cytoplasmic side of the membrane; it reads QFGDREFYRDWWNSESITYFWQNWNIPVHKWCIRHFYKPMLRRGSS. Residues 355–400 are intracellular loop 2 (IL2); it reads QFGDREFYRDWWNSESITYFWQNWNIPVHKWCIRHFYKPMLRRGSS. Residues 361 to 367 carry the FYXDWWN motif motif; the sequence is FYRDWWN. Residues 375–383, Y391, and R405 each bind an acyl-CoA; that span reads WQNWNIPVH. An amphipathic helix (AH) region spans residues 381-395; it reads PVHKWCIRHFYKPML. Residues 401 to 421 traverse the membrane as a helical segment; sequence KWAARTAVFLASAFFHEYLVS. The active site involves H416. At 422-429 the chain is on the lumenal side; that stretch reads IPLRMFRL. The helical transmembrane segment at 430-448 threads the bilayer; that stretch reads WAFTGMMAQIPLAWIVGRF. The Cytoplasmic segment spans residues 449–450; the sequence is FR. A helical transmembrane segment spans residues 451-482; sequence GNYGNAAVWLSLIIGQPVAVLMYVHDYYVLNR. Position 478 (Y478) interacts with an acyl-CoA. At 483 to 489 the chain is on the lumenal side; sequence EAPAAGT.

This sequence belongs to the membrane-bound acyltransferase family. Sterol o-acyltransferase subfamily. As to quaternary structure, homodimer or homotetramer; both forms have similar enzymatic activities.

Its subcellular location is the endoplasmic reticulum membrane. The catalysed reaction is an acyl-CoA + a 1,2-diacyl-sn-glycerol = a triacyl-sn-glycerol + CoA. It catalyses the reaction all-trans-retinol + an acyl-CoA = an all-trans-retinyl ester + CoA. The enzyme catalyses 2-(9Z-octadecenoyl)-glycerol + (9Z)-octadecenoyl-CoA = 1,2-di-(9Z-octadecenoyl)-sn-glycerol + CoA. It carries out the reaction 1,2-di-(9Z-octadecenoyl)-sn-glycerol + (9Z)-octadecenoyl-CoA = 1,2,3-tri-(9Z-octadecenoyl)-glycerol + CoA. The catalysed reaction is all-trans-retinol + hexadecanoyl-CoA = all-trans-retinyl hexadecanoate + CoA. It catalyses the reaction 1-O-(9Z-octadecenyl)-glycerol + (9Z)-octadecenoyl-CoA = 1-O-(9Z-octadecyl)-3-(9Z-octadecenoyl)-glycerol + CoA. The enzyme catalyses 1-O-(9Z-octadecyl)-3-(9Z-octadecenoyl)-glycerol + (9Z)-octadecenoyl-CoA = 1-O-(9Z-octadecenyl)-2,3-di-(9Z-octadecenoyl)glycerol + CoA. It carries out the reaction 1-(9Z-octadecenoyl)-glycerol + (9Z)-octadecenoyl-CoA = 1,2-di-(9Z-octadecenoyl)-glycerol + CoA. The catalysed reaction is 1,2-di-(9Z-octadecenoyl)-glycerol + (9Z)-octadecenoate + H(+) = 1,2,3-tri-(9Z-octadecenoyl)-glycerol + H2O. It catalyses the reaction 1-octadecanoyl-2-(5Z,8Z,11Z,14Z-eicosatetraenoyl)-sn-glycerol + (9Z)-octadecenoyl-CoA = 1-octadecanoyl-2-(5Z,8Z,11Z,14Z)-eicosatetraenoyl-3-(9Z)-octadecenoyl-sn-glycerol + CoA. The enzyme catalyses hexadecane-1,2-diol + 2 hexadecanoyl-CoA = 1,2-O,O-dihexadecanoyl-1,2-hexadecanediol + 2 CoA. It carries out the reaction hexadecane-1,2-diol + hexadecanoyl-CoA = 2-hydroxyhexadecyl hexadecanoate + CoA. The catalysed reaction is 2-(9Z-octadecenoyl)-glycerol + hexadecanoyl-CoA = 1-hexadecanoyl-2-(9Z-octadecenoyl)-sn-glycerol + CoA. It catalyses the reaction 1,2-di-(9Z-octadecenoyl)-sn-glycerol + hexadecanoyl-CoA = 1,2-di-(9Z)-octadecenoyl-3-hexadecanoyl-sn-glycerol + CoA. The enzyme catalyses hexadecan-1-ol + hexadecanoyl-CoA = hexadecanyl hexadecanoate + CoA. It carries out the reaction 13-cis-retinol + hexadecanoyl-CoA = 13-cis-retinyl hexadecanoate + CoA. The catalysed reaction is 1,3-di-(9Z-octadecenoyl)-glycerol + (9Z)-octadecenoyl-CoA = 1,2,3-tri-(9Z-octadecenoyl)-glycerol + CoA. It catalyses the reaction 2,3-di-(9Z)-octadecenoyl-sn-glycerol + (9Z)-octadecenoyl-CoA = 1,2,3-tri-(9Z-octadecenoyl)-glycerol + CoA. The protein operates within lipid metabolism; glycerolipid metabolism. Its function is as follows. Catalyzes the terminal and only committed step in triacylglycerol synthesis by using diacylglycerol and fatty acyl CoA as substrates. Highly expressed in epithelial cells of the small intestine and its activity is essential for the absorption of dietary fats. In liver, plays a role in esterifying exogenous fatty acids to glycerol, and is required to synthesize fat for storage. Also present in female mammary glands, where it produces fat in the milk. May be involved in VLDL (very low density lipoprotein) assembly. In contrast to DGAT2 it is not essential for survival. Functions as the major acyl-CoA retinol acyltransferase (ARAT) in the skin, where it acts to maintain retinoid homeostasis and prevent retinoid toxicity leading to skin and hair disorders. Exhibits additional acyltransferase activities, includin acyl CoA:monoacylglycerol acyltransferase (MGAT), wax monoester and wax diester synthases. Also able to use 1-monoalkylglycerol (1-MAkG) as an acyl acceptor for the synthesis of monoalkyl-monoacylglycerol (MAMAG). This Bos taurus (Bovine) protein is Diacylglycerol O-acyltransferase 1 (DGAT1).